Consider the following 410-residue polypeptide: Sensor-like histidine kinase SenX3 (410 aa).

2 helical membrane-spanning segments follow: residues 6 to 26 (ALLL…AVGM) and 46 to 66 (ITVS…AAVV). A Histidine kinase domain is found at 164–380 (NVSHELKTPV…TFTLALPALI (217 aa)). Phosphohistidine; by autocatalysis is present on H167. The tract at residues 385 to 410 (DDERPEQAREPELRSNRSQREEELSR) is disordered.

Autophosphorylated.

It is found in the cell membrane. It catalyses the reaction ATP + protein L-histidine = ADP + protein N-phospho-L-histidine.. In terms of biological role, member of the two-component regulatory system SenX3/RegX3. Autophosphorylates, and then transfers the phosphate group to RegX3. This is Sensor-like histidine kinase SenX3 from Mycobacterium bovis (strain ATCC BAA-935 / AF2122/97).